Reading from the N-terminus, the 251-residue chain is uncharacterized protein (251 aa).

A signal peptide spans 1–18 (MRILIILSIILCSFFARA).

It belongs to the MlaA family.

This is an uncharacterized protein from Rickettsia typhi (strain ATCC VR-144 / Wilmington).